Here is a 379-residue protein sequence, read N- to C-terminus: MKGDKRRDIRDILLHDETLFRNMNAFDPDYVPENYRYRESQMEALAVCIRPALRNGRPVNAVILGSCATGKTTAIKKIFEMVESTSEGVVCCYINCQLHTTRFGIFSQIYSKIFGHQPPETGVPFSRIYQTIMQHLASEKRALVVALDDINHLFYSKNANKVLYDILRAHEVFEGVRTGVFAVLSDIEFRYALDKNVDSIFIPQEIVFPPYTREEVFNILRDRVRVGFYPGVISDELLERITDHTMDTGDLRYGIDLLRVCGNLAEADASPVIGEEHLERALKSTGPVNLIHTVRTLNENEREFLRILADAGEDMTAGALYELFRESTGSSYSSFNRIIEKLEFLRLIDTRLTGKGVRGNSRILIPRFSREDLRRCPGF.

ATP-binding positions include 69-73 (TGKTT), tyrosine 211, and arginine 223.

Belongs to the CDC6/cdc18 family. As to quaternary structure, interacts with MCM. Autophosphorylated on a serine. Phosphorylation is inhibited by binding to MCM. Both single-stranded DNA and double-stranded DNA inhibit the phosphorylation reaction.

In terms of biological role, involved in regulation of DNA replication. Dissociates the MCM complex and inhibits the MCM helicase activity, suggesting that it may function as a helicase loader. Binds to both specific and random double-stranded or single-stranded DNA. The chain is ORC1-type DNA replication protein 2 (cdc6-2) from Methanothermobacter thermautotrophicus (strain ATCC 29096 / DSM 1053 / JCM 10044 / NBRC 100330 / Delta H) (Methanobacterium thermoautotrophicum).